The following is a 799-amino-acid chain: High affinity nerve growth factor receptor (799 aa).

Residues 1-32 form the signal peptide; that stretch reads MLRGQRHGQLGWHRPAAGLGGLVTSLMLACAC. The Extracellular portion of the chain corresponds to 33–418; it reads AASCRETCCP…DPVEKKDETP (386 aa). Disulfide bonds link cysteine 36–cysteine 41 and cysteine 40–cysteine 50. Asparagine 67 is a glycosylation site (N-linked (GlcNAc...) asparagine). 2 LRR repeats span residues 90–113 and 116–137; these read LGEL…AFHF and RLSH…TVQG. Asparagine 121, asparagine 190, asparagine 204, asparagine 255, asparagine 264, asparagine 320, asparagine 325, asparagine 341, asparagine 361, and asparagine 404 each carry an N-linked (GlcNAc...) asparagine glycan. The region spanning 148–219 is the LRRCT domain; it reads NPLHCSCALL…GDDVFLQCQV (72 aa). Cysteine 154 and cysteine 193 form a disulfide bridge. Ig-like C2-type domains follow at residues 196 to 285 and 295 to 368; these read PSVK…VSVS and AVEQ…LAAN. Disulfide bonds link cysteine 217–cysteine 267 and cysteine 302–cysteine 348. Residues 419–442 traverse the membrane as a helical segment; it reads FGVSVAVGLAVSAALFLSALLLVL. The Cytoplasmic portion of the chain corresponds to 443 to 799; that stretch reads NKCGQRSKFG…APPSYLDVLG (357 aa). The tract at residues 472-493 is interaction with SQSTM1; the sequence is MTLGGSSLSPTEGKGSGLQGHI. The residue at position 499 (tyrosine 499) is a Phosphotyrosine; by autocatalysis. Residues 513–784 enclose the Protein kinase domain; the sequence is IILKWELGEG…LSMKDVHARL (272 aa). Residues 519 to 527 and lysine 547 each bind ATP; that span reads LGEGAFGKV. Aspartate 653 functions as the Proton acceptor in the catalytic mechanism. Tyrosine 679, tyrosine 683, tyrosine 684, and tyrosine 794 each carry phosphotyrosine; by autocatalysis.

Belongs to the protein kinase superfamily. Tyr protein kinase family. Insulin receptor subfamily. As to quaternary structure, exists in a dynamic equilibrium between monomeric (low affinity) and dimeric (high affinity) structures. Homodimerization is induced by binding of a NGF dimer. Found in a complex, at least composed of KIDINS220, MAGI2, NTRK1 and RAPGEF2; the complex is mainly formed at late endosomes in a nerve growth factor (NGF)-dependent manner. Interacts with RAPGEF2; the interaction is strengthened after NGF stimulation. Interacts with SQSTM1; bridges NTRK1 to NGFR. Forms a ternary complex with NGFR and KIDINS220; this complex is affected by the expression levels of KIDINS220 and an increase in KIDINS220 expression leads to a decreased association of NGFR and NTRK1. Interacts (phosphorylated upon activation by NGF) with SHC1; mediates SHC1 phosphorylation and activation. Interacts (phosphorylated upon activation by NGF) with PLCG1; mediates PLCG1 phosphorylation and activation. Interacts (phosphorylated) with SH2B1 and SH2B2. Interacts with GRB2. Interacts with PIK3R1. Interacts with FRS2. Interacts with SORT1; may regulate NTRK1 anterograde axonal transport. Interacts with SH2D1A; regulates NTRK1. Interacts with NRADD. Interacts with RAB7A. Interacts with PTPRS. Interacts with USP36; USP36 does not deubiquitinate NTRK1. Interacts with GGA3. Interacts with TSPAN1; this interaction promotes NTRK1 stability. Post-translationally, ligand-mediated autophosphorylation. Interaction with SQSTM1 is phosphotyrosine-dependent. Autophosphorylation at Tyr-499 mediates interaction and phosphorylation of SHC1. N-glycosylated. In terms of processing, ubiquitinated. Undergoes polyubiquitination upon activation; regulated by NGFR. Ubiquitination by NEDD4L leads to degradation. Ubiquitination regulates the internalization of the receptor. Isoform Trka-II is primarily expressed in neuronal cells; isoform Trka-I is found in non-neuronal tissues.

The protein resides in the cell membrane. It is found in the early endosome membrane. Its subcellular location is the late endosome membrane. It localises to the recycling endosome membrane. It catalyses the reaction L-tyrosyl-[protein] + ATP = O-phospho-L-tyrosyl-[protein] + ADP + H(+). The pro-survival signaling effect of NTRK1 in neurons requires its endocytosis into signaling early endosomes and its retrograde axonal transport. This is regulated by different proteins including CFL1, RAC1 and SORT1. NTF3 is unable to induce this signaling probably due to the lability of the NTF3-NTRK1 complex in endosomes. SH2D1A inhibits the autophosphorylation of the receptor, and alters the recruitment and activation of downstream effectors and signaling cascades. Regulated by NGFR. Its function is as follows. Receptor tyrosine kinase involved in the development and the maturation of the central and peripheral nervous systems through regulation of proliferation, differentiation and survival of sympathetic and nervous neurons. High affinity receptor for NGF which is its primary ligand. Can also bind and be activated by NTF3/neurotrophin-3. However, NTF3 only supports axonal extension through NTRK1 but has no effect on neuron survival. Upon dimeric NGF ligand-binding, undergoes homodimerization, autophosphorylation and activation. Recruits, phosphorylates and/or activates several downstream effectors including SHC1, FRS2, SH2B1, SH2B2 and PLCG1 that regulate distinct overlapping signaling cascades driving cell survival and differentiation. Through SHC1 and FRS2 activates a GRB2-Ras-MAPK cascade that regulates cell differentiation and survival. Through PLCG1 controls NF-Kappa-B activation and the transcription of genes involved in cell survival. Through SHC1 and SH2B1 controls a Ras-PI3 kinase-AKT1 signaling cascade that is also regulating survival. In absence of ligand and activation, may promote cell death, making the survival of neurons dependent on trophic factors. The chain is High affinity nerve growth factor receptor (Ntrk1) from Rattus norvegicus (Rat).